Consider the following 337-residue polypeptide: Undecaprenyl-phosphate 4-deoxy-4-formamido-L-arabinose transferase (337 aa).

2 helical membrane passes run 235–255 and 270–290; these read LSII…LLIV and FVLF…MGLL.

The protein belongs to the glycosyltransferase 2 family.

It localises to the cell inner membrane. It catalyses the reaction UDP-4-deoxy-4-formamido-beta-L-arabinose + di-trans,octa-cis-undecaprenyl phosphate = 4-deoxy-4-formamido-alpha-L-arabinopyranosyl di-trans,octa-cis-undecaprenyl phosphate + UDP. It participates in glycolipid biosynthesis; 4-amino-4-deoxy-alpha-L-arabinose undecaprenyl phosphate biosynthesis; 4-amino-4-deoxy-alpha-L-arabinose undecaprenyl phosphate from UDP-4-deoxy-4-formamido-beta-L-arabinose and undecaprenyl phosphate: step 1/2. It functions in the pathway bacterial outer membrane biogenesis; lipopolysaccharide biosynthesis. Functionally, catalyzes the transfer of 4-deoxy-4-formamido-L-arabinose from UDP to undecaprenyl phosphate. The modified arabinose is attached to lipid A and is required for resistance to polymyxin and cationic antimicrobial peptides. This is Undecaprenyl-phosphate 4-deoxy-4-formamido-L-arabinose transferase from Pseudomonas syringae pv. syringae (strain B728a).